Reading from the N-terminus, the 94-residue chain is RING finger protein Z (94 aa).

Residues 1 to 19 show a composition bias toward polar residues; sequence MGNCNGASKSNQPDSSRVT. The segment at 1–20 is disordered; that stretch reads MGNCNGASKSNQPDSSRVTQ. G2 carries the N-myristoyl glycine; by host lipid modification. An RING-type; atypical zinc finger spans residues 39–75; that stretch reads CKCCWFADTNLITCNDHYLCLRCHQVMLRNSDLCNIC. The short motif at 89–92 is the PTAP/PSAP motif element; that stretch reads PTAP.

The protein belongs to the arenaviridae Z protein family. As to quaternary structure, interacts with protein NP; this interaction probably directs the encapsidated genome to budding sites. Interacts (via RING domain) with polymerase L; this interaction inhibits viral transcription and replication, Z partially blocks the product exit tunnel for the releasing nascent RNA product. Interacts with the glycoprotein complex; this interaction plays a role in virion budding. Interacts with host eIF4E; this interaction results in eIF4E reduced affinity for its substrate, the 5'-m7 G cap structure. Interacts (via late-budding domain) with host TSG101; this interaction is essential for budding and release of viral particles. Interacts with host RPLP0; this interaction may serve to load ribosome-like particles inside the virion. Interacts with host PML; this interaction induces PML bodies redistribution in the cytoplasm upon viral infection. Myristoylation is required for the role of RING finger protein Z in assembly and budding.

Its subcellular location is the virion. It localises to the host cytoplasm. The protein resides in the host perinuclear region. The protein localises to the host cell membrane. In terms of biological role, plays a crucial role in virion assembly and budding. Expressed late in the virus life cycle, it acts as an inhibitor of viral transcription and RNA synthesis by interacting with the viral polymerase L. Presumably recruits the NP encapsidated genome to cellular membranes at budding sites via direct interaction with NP. Plays critical roles in the final steps of viral release by interacting with host TSG101, a member of the vacuolar protein-sorting pathway and using other cellular host proteins involved in vesicle formation pathway. The budding of the virus progeny occurs after association of protein Z with the viral glycoprotein complex SSP-GP1-GP2 at the cell periphery, step that requires myristoylation of protein Z. Also selectively represses protein production by associating with host eIF4E. In cell-based minigenome assay, has an inhibitory effect on the ribonucleoprotein machinery (vRNP), which is responsible for the replication and transcription of the viral genome. The chain is RING finger protein Z from Akodon azarae (Azara's grass mouse).